A 250-amino-acid chain; its full sequence is ATP synthase subunit a (250 aa).

6 consecutive transmembrane segments (helical) span residues 26–46 (FTNA…FLYL), 84–104 (FFPM…LGMF), 114–134 (IIVT…YGFY), 143–163 (LFVP…IEVI), 193–213 (FVAS…LPLI), and 216–236 (VALT…FAVL).

This sequence belongs to the ATPase A chain family. As to quaternary structure, F-type ATPases have 2 components, CF(1) - the catalytic core - and CF(0) - the membrane proton channel. CF(1) has five subunits: alpha(3), beta(3), gamma(1), delta(1), epsilon(1). CF(0) has three main subunits: a(1), b(2) and c(9-12). The alpha and beta chains form an alternating ring which encloses part of the gamma chain. CF(1) is attached to CF(0) by a central stalk formed by the gamma and epsilon chains, while a peripheral stalk is formed by the delta and b chains.

It localises to the cell inner membrane. In terms of biological role, key component of the proton channel; it plays a direct role in the translocation of protons across the membrane. The polypeptide is ATP synthase subunit a (Sinorhizobium fredii (strain NBRC 101917 / NGR234)).